A 252-amino-acid polypeptide reads, in one-letter code: 5'-nucleotidase SurE (252 aa).

D8, D9, S39, and N91 together coordinate a divalent metal cation.

It belongs to the SurE nucleotidase family. A divalent metal cation serves as cofactor.

It is found in the cytoplasm. It catalyses the reaction a ribonucleoside 5'-phosphate + H2O = a ribonucleoside + phosphate. Its function is as follows. Nucleotidase that shows phosphatase activity on nucleoside 5'-monophosphates. The polypeptide is 5'-nucleotidase SurE (Legionella pneumophila (strain Lens)).